Reading from the N-terminus, the 187-residue chain is Elongation factor P (187 aa).

It belongs to the elongation factor P family.

The protein localises to the cytoplasm. It functions in the pathway protein biosynthesis; polypeptide chain elongation. Functionally, involved in peptide bond synthesis. Stimulates efficient translation and peptide-bond synthesis on native or reconstituted 70S ribosomes in vitro. Probably functions indirectly by altering the affinity of the ribosome for aminoacyl-tRNA, thus increasing their reactivity as acceptors for peptidyl transferase. This Acidothermus cellulolyticus (strain ATCC 43068 / DSM 8971 / 11B) protein is Elongation factor P.